Reading from the N-terminus, the 377-residue chain is O-phospho-L-seryl-tRNA:Cys-tRNA synthase (377 aa).

Residues 82–83, N189, and 212–214 contribute to the pyridoxal 5'-phosphate site; these read AR and SGH. K215 carries the post-translational modification N6-(pyridoxal phosphate)lysine.

It belongs to the SepCysS family. As to quaternary structure, homodimer. Interacts with SepRS. Pyridoxal 5'-phosphate serves as cofactor.

It catalyses the reaction O-phospho-L-seryl-tRNA(Cys) + hydrogen sulfide + H(+) = L-cysteinyl-tRNA(Cys) + phosphate. In terms of biological role, converts O-phospho-L-seryl-tRNA(Cys) (Sep-tRNA(Cys)) to L-cysteinyl-tRNA(Cys) (Cys-tRNA(Cys)). This is O-phospho-L-seryl-tRNA:Cys-tRNA synthase from Methanocaldococcus jannaschii (strain ATCC 43067 / DSM 2661 / JAL-1 / JCM 10045 / NBRC 100440) (Methanococcus jannaschii).